The following is a 108-amino-acid chain: Pyrimidine/purine nucleoside phosphorylase (108 aa).

The protein belongs to the nucleoside phosphorylase PpnP family.

The catalysed reaction is a purine D-ribonucleoside + phosphate = a purine nucleobase + alpha-D-ribose 1-phosphate. The enzyme catalyses adenosine + phosphate = alpha-D-ribose 1-phosphate + adenine. It catalyses the reaction cytidine + phosphate = cytosine + alpha-D-ribose 1-phosphate. It carries out the reaction guanosine + phosphate = alpha-D-ribose 1-phosphate + guanine. The catalysed reaction is inosine + phosphate = alpha-D-ribose 1-phosphate + hypoxanthine. The enzyme catalyses thymidine + phosphate = 2-deoxy-alpha-D-ribose 1-phosphate + thymine. It catalyses the reaction uridine + phosphate = alpha-D-ribose 1-phosphate + uracil. It carries out the reaction xanthosine + phosphate = alpha-D-ribose 1-phosphate + xanthine. Functionally, catalyzes the phosphorolysis of diverse nucleosides, yielding D-ribose 1-phosphate and the respective free bases. Can use uridine, adenosine, guanosine, cytidine, thymidine, inosine and xanthosine as substrates. Also catalyzes the reverse reactions. This Acinetobacter baylyi (strain ATCC 33305 / BD413 / ADP1) protein is Pyrimidine/purine nucleoside phosphorylase.